A 696-amino-acid chain; its full sequence is Polyribonucleotide nucleotidyltransferase (696 aa).

Asp489 and Asp495 together coordinate Mg(2+). In terms of domain architecture, KH spans 556–615; it reads PQYVTMKINPEKIRDVIGKGGVVIREITEATNCAIDISDDGTIKIAAHTTEEGEAAKRRI. One can recognise an S1 motif domain in the interval 625-693; sequence GKVYEGTVVK…RQGRVRLSMK (69 aa).

It belongs to the polyribonucleotide nucleotidyltransferase family. As to quaternary structure, component of the RNA degradosome, which is a multiprotein complex involved in RNA processing and mRNA degradation. Requires Mg(2+) as cofactor.

The protein resides in the cytoplasm. The enzyme catalyses RNA(n+1) + phosphate = RNA(n) + a ribonucleoside 5'-diphosphate. Involved in mRNA degradation. Catalyzes the phosphorolysis of single-stranded polyribonucleotides processively in the 3'- to 5'-direction. The polypeptide is Polyribonucleotide nucleotidyltransferase (Coxiella burnetii (strain RSA 331 / Henzerling II)).